A 57-amino-acid polypeptide reads, in one-letter code: uncharacterized protein (57 aa).

Residues Phe-10–Leu-27 form a helical membrane-spanning segment. Residues Lys-28–Glu-55 adopt a coiled-coil conformation.

It is found in the membrane. This is an uncharacterized protein from Schizosaccharomyces pombe (strain 972 / ATCC 24843) (Fission yeast).